We begin with the raw amino-acid sequence, 185 residues long: Intraflagellar transport protein 22 homolog (185 aa).

GTP-binding positions include 10–17, 63–67, and 123–126; these read GPCESGKT, DCGGD, and HKPG. Ser137 is modified (phosphoserine).

It belongs to the small GTPase superfamily. Rab family. In terms of assembly, component of the IFT complex B, at least composed of IFT20, IFT22, IFT25, IFT27, IFT46, IFT52, TRAF3IP1/IFT54, IFT57, IFT74, IFT80, IFT81, and IFT88. Interacts with IFT88. Interacts with CFAP61.

Its subcellular location is the cell projection. It is found in the cilium. Small GTPase-like component of the intraflagellar transport (IFT) complex B. This Homo sapiens (Human) protein is Intraflagellar transport protein 22 homolog (IFT22).